A 340-amino-acid polypeptide reads, in one-letter code: Diacylglycerol acyltransferase/mycolyltransferase Ag85C (340 aa).

Positions 1–45 (MTFFEQVRRLRSAATTLPRRLAIAAMGAVLVYGLVGTFGGPATAG) are cleaved as a signal peptide. 86-87 (LR) serves as a coordination point for substrate. The segment at 102-112 (FEEYYQSGLSV) is fibronectin-binding. Positions 170 and 198 each coordinate substrate. S170 acts as the Nucleophile in catalysis. E274 is an active-site residue. Residues 276-279 (LTLR) and 306-308 (HSW) contribute to the substrate site. H306 is an active-site residue.

It belongs to the mycobacterial A85 antigen family. In terms of assembly, homodimer.

Its subcellular location is the secreted. The enzyme catalyses an acyl-CoA + a 1,2-diacyl-sn-glycerol = a triacyl-sn-glycerol + CoA. The catalysed reaction is 2 alpha,alpha'-trehalose 6-mycolate = alpha,alpha'-trehalose 6,6'-bismycolate + alpha,alpha-trehalose. Its function is as follows. The antigen 85 proteins (FbpA, FbpB, FbpC) are responsible for the high affinity of mycobacteria to fibronectin, a large adhesive glycoprotein, which facilitates the attachment of M.tuberculosis to murine alveolar macrophages (AMs). They also help to maintain the integrity of the cell wall by catalyzing the transfer of mycolic acids to cell wall arabinogalactan and through the synthesis of alpha,alpha-trehalose dimycolate (TDM, cord factor). They catalyze the transfer of a mycoloyl residue from one molecule of alpha,alpha-trehalose monomycolate (TMM) to another TMM, leading to the formation of TDM. This is Diacylglycerol acyltransferase/mycolyltransferase Ag85C (fbpC) from Mycobacterium bovis (strain ATCC BAA-935 / AF2122/97).